The sequence spans 598 residues: Probable translation initiation factor IF-2 (598 aa).

A tr-type G domain is found at L3–K225. Residues G12–T19 form a G1 region. G12–T19 provides a ligand contact to GTP. The interval G37 to H41 is G2. A G3 region spans residues D76–G79. GTP is bound by residues D76 to H80 and N130 to D133. The G4 stretch occupies residues N130–D133. Positions S200–M202 are G5.

The protein belongs to the TRAFAC class translation factor GTPase superfamily. Classic translation factor GTPase family. IF-2 subfamily.

Its function is as follows. Function in general translation initiation by promoting the binding of the formylmethionine-tRNA to ribosomes. Seems to function along with eIF-2. The chain is Probable translation initiation factor IF-2 from Methanococcus maripaludis (strain DSM 14266 / JCM 13030 / NBRC 101832 / S2 / LL).